Consider the following 579-residue polypeptide: Putative fatty-acid--CoA ligase fadD21 (579 aa).

The protein belongs to the ATP-dependent AMP-binding enzyme family.

This chain is Putative fatty-acid--CoA ligase fadD21 (fadD21), found in Mycobacterium leprae (strain TN).